A 71-amino-acid chain; its full sequence is MAKNSKYSDKQVDAVLHDMIAVLEKHQAPVELSLIVLGNMVTNLLASSVGTHQQAALAQAFSDALMNSVKK.

The protein belongs to the UPF0352 family.

This chain is UPF0352 protein Asuc_0778, found in Actinobacillus succinogenes (strain ATCC 55618 / DSM 22257 / CCUG 43843 / 130Z).